We begin with the raw amino-acid sequence, 270 residues long: Flavodoxin/ferredoxin--NADP reductase (270 aa).

One can recognise an FAD-binding FR-type domain in the interval 12–113; that stretch reads VLPDAQTVTS…PKPVGTLVID (102 aa). Residues 62–65, 78–80, and 86–88 contribute to the FAD site; these read RAYS, YSI, and PLT. An NADP(+)-binding site is contributed by Thr126. Thr128 contributes to the FAD binding site. Residues Arg156, 192–193, Arg201, and Asp238 each bind NADP(+); that span reads TR. Residue 264–270 participates in FAD binding; the sequence is AFVGEGI.

It belongs to the ferredoxin--NADP reductase type 1 family. As to quaternary structure, monomer. Requires FAD as cofactor.

Its subcellular location is the cytoplasm. It carries out the reaction 2 reduced [2Fe-2S]-[ferredoxin] + NADP(+) + H(+) = 2 oxidized [2Fe-2S]-[ferredoxin] + NADPH. The catalysed reaction is reduced [flavodoxin] + NADP(+) = oxidized [flavodoxin] + NADPH + 2 H(+). In terms of biological role, transports electrons between flavodoxin or ferredoxin and NADPH. This Rhodobacter capsulatus (Rhodopseudomonas capsulata) protein is Flavodoxin/ferredoxin--NADP reductase.